The chain runs to 619 residues: Dihydroxy-acid dehydratase (619 aa).

D81 contributes to the Mg(2+) binding site. A [2Fe-2S] cluster-binding site is contributed by C122. 2 residues coordinate Mg(2+): D123 and K124. The residue at position 124 (K124) is an N6-carboxylysine. C195 is a [2Fe-2S] cluster binding site. E494 contributes to the Mg(2+) binding site. S520 functions as the Proton acceptor in the catalytic mechanism.

The protein belongs to the IlvD/Edd family. As to quaternary structure, homodimer. [2Fe-2S] cluster is required as a cofactor. It depends on Mg(2+) as a cofactor.

The enzyme catalyses (2R)-2,3-dihydroxy-3-methylbutanoate = 3-methyl-2-oxobutanoate + H2O. It catalyses the reaction (2R,3R)-2,3-dihydroxy-3-methylpentanoate = (S)-3-methyl-2-oxopentanoate + H2O. It functions in the pathway amino-acid biosynthesis; L-isoleucine biosynthesis; L-isoleucine from 2-oxobutanoate: step 3/4. It participates in amino-acid biosynthesis; L-valine biosynthesis; L-valine from pyruvate: step 3/4. In terms of biological role, functions in the biosynthesis of branched-chain amino acids. Catalyzes the dehydration of (2R,3R)-2,3-dihydroxy-3-methylpentanoate (2,3-dihydroxy-3-methylvalerate) into 2-oxo-3-methylpentanoate (2-oxo-3-methylvalerate) and of (2R)-2,3-dihydroxy-3-methylbutanoate (2,3-dihydroxyisovalerate) into 2-oxo-3-methylbutanoate (2-oxoisovalerate), the penultimate precursor to L-isoleucine and L-valine, respectively. The chain is Dihydroxy-acid dehydratase from Shewanella sp. (strain ANA-3).